A 216-amino-acid polypeptide reads, in one-letter code: Phosphoenolpyruvate guanylyltransferase (216 aa).

Threonine 150, glycine 165, and serine 168 together coordinate phosphoenolpyruvate.

The protein belongs to the CofC family.

The enzyme catalyses phosphoenolpyruvate + GTP + H(+) = enolpyruvoyl-2-diphospho-5'-guanosine + diphosphate. The protein operates within cofactor biosynthesis; coenzyme F420 biosynthesis. Guanylyltransferase that catalyzes the activation of phosphoenolpyruvate (PEP) as enolpyruvoyl-2-diphospho-5'-guanosine, via the condensation of PEP with GTP. It is involved in the biosynthesis of coenzyme F420, a hydride carrier cofactor. This is Phosphoenolpyruvate guanylyltransferase from Mycobacterium leprae (strain Br4923).